A 500-amino-acid polypeptide reads, in one-letter code: Probable transcription factor FPSE_09189 (500 aa).

Disordered stretches follow at residues 161–197 and 457–500; these read MVRH…PSLA and IRTG…TQLE. Positions 459–474 are enriched in basic and acidic residues; it reads TGHEDSSRDGGRENKA. A compositionally biased stretch (polar residues) spans 475–484; that stretch reads MNRNRSTGNS.

The protein resides in the nucleus. The two putative transcription factors FPSE_09188 and FPSE_09189 could be responsible for orchestrating expression of the W493 A and B biosynthesis cluster genes. W493 A and B consist of six amino acid residues D-allo-thr, L-Ala, D-Ala, L-Gln, D-Tyr, and L-Val/L-Ile linked to a 3-hydroxy-4-methyltetradecanoic acid polyketide chain. The polypeptide is Probable transcription factor FPSE_09189 (Fusarium pseudograminearum (strain CS3096) (Wheat and barley crown-rot fungus)).